Reading from the N-terminus, the 323-residue chain is Serine/threonine-protein phosphatase PP1-gamma catalytic subunit (323 aa).

An N-acetylalanine modification is found at A2. 4 residues coordinate Mn(2+): D64, H66, D92, and N124. H125 acts as the Proton donor in catalysis. Residues H173 and H248 each coordinate Mn(2+). A disordered region spans residues 302 to 323 (KKPNATRPVTPPRGMITKQAKK). Phosphothreonine occurs at positions 307 and 311.

Belongs to the PPP phosphatase family. PP-1 subfamily. PP1 comprises a catalytic subunit, PPP1CA, PPP1CB or PPP1CC, which is folded into its native form by inhibitor 2 and glycogen synthetase kinase 3, and then complexed to one or several targeting or regulatory subunits. PPP1R12A, PPP1R12B and PPP1R12C mediate binding to myosin. PPP1R3A (in skeletal muscle), PPP1R3B (in liver), PPP1R3C, PPP1R3D and PPP1R3F (in brain) mediate binding to glycogen. Interacts with cyanobacterial toxin microcystin; disulfide-linked. Interacts with PPP1R3B and PPP1R7. Isoform 2 interacts with SPZ1. Interacts with CDCA2. PPP1R15A and PPP1R15B mediate binding to EIF2S1. Part of a complex containing PPP1R15B, PP1 and NCK1/2. Interacts with IKFZ1; the interaction targets PPP1CC to pericentromeric heterochromatin, dephosphorylates IKAROS, stabilizes it and prevents it from degradation. Interacts with PPP1R42; the interaction is direct. Interacts with NOM1 and PPP1R8. Component of the PTW/PP1 phosphatase complex, composed of PPP1R10/PNUTS, TOX4, WDR82, and PPP1CA or PPP1CB or PPP1CC. Interacts with PPP1R8. Interacts with isoform 1 and isoform 4 NEK2. Interacts with URI1; the interaction is phosphorylation-dependent and occurs in a growth factor-dependent manner. Interacts with FOXP3. Interacts with TMEM225 (via RVxF motif). Interacts with MKI67. Interacts with RRP1B; this targets PPP1CC to the nucleolus. Interacts with PPP1R2B. Found in a complex with PPP1CA, PPP1CC, SHC1 and PEAK1. Interacts with DYNLT4. Interacts (via RVxF motif) with FIRRM; regulates PLK1 kinase activity. Interacts with the KNL1 complex subunit KNL1; the interaction is direct and mutually exclusive with KNL1 binding to microtubules. Component of the SHOC2-MRAS-PP1c (SMP) complex consisting of SHOC2, GTP-bound M-Ras/MRAS and the catalytic subunit of protein phosphatase 1 (either PPP1CA, PPP1CB or PPP1CC). SHOC2 and PP1c preferably bind M-Ras/MRAS, but they also bind K-Ras/KRAS, N-Ras/NRAS and H-Ras/HRAS; these interactions are GTP-dependent and both SHOC2 and PP1c are required to form a stable complex. Interacts with SHOC2 in the absence of Ras GTPases. Requires Mn(2+) as cofactor. Post-translationally, phosphorylated by NEK2.

The protein resides in the cytoplasm. The protein localises to the nucleus. Its subcellular location is the nucleolus. It localises to the nucleoplasm. It is found in the nucleus speckle. The protein resides in the chromosome. The protein localises to the centromere. Its subcellular location is the kinetochore. It localises to the cleavage furrow. It is found in the midbody. The protein resides in the mitochondrion. The protein localises to the cytoskeleton. Its subcellular location is the microtubule organizing center. The catalysed reaction is O-phospho-L-seryl-[protein] + H2O = L-seryl-[protein] + phosphate. The enzyme catalyses O-phospho-L-threonyl-[protein] + H2O = L-threonyl-[protein] + phosphate. Inactivated by binding to URI1. The phosphatase activity of the PPP1R15A-PP1 complex toward EIF2S1 is specifically inhibited by Salubrinal, a drug that protects cells from endoplasmic reticulum stress. Its function is as follows. Protein phosphatase that associates with over 200 regulatory proteins to form highly specific holoenzymes which dephosphorylate hundreds of biological targets. Protein phosphatase 1 (PP1) is essential for cell division, and participates in the regulation of glycogen metabolism, muscle contractility and protein synthesis. Dephosphorylates RPS6KB1. Involved in regulation of ionic conductances and long-term synaptic plasticity. May play an important role in dephosphorylating substrates such as the postsynaptic density-associated Ca(2+)/calmodulin dependent protein kinase II. Component of the PTW/PP1 phosphatase complex, which plays a role in the control of chromatin structure and cell cycle progression during the transition from mitosis into interphase. In balance with CSNK1D and CSNK1E, determines the circadian period length, through the regulation of the speed and rhythmicity of PER1 and PER2 phosphorylation. May dephosphorylate CSNK1D and CSNK1E. Regulates the recruitment of the SKA complex to kinetochores. Dephosphorylates the 'Ser-418' residue of FOXP3 in regulatory T-cells (Treg) from patients with rheumatoid arthritis, thereby inactivating FOXP3 and rendering Treg cells functionally defective. Together with PPP1CA (PP1-alpha subunit), dephosphorylates IFIH1/MDA5 and RIG-I leading to their activation and a functional innate immune response. Core component of the SHOC2-MRAS-PP1c (SMP) holophosphatase complex that regulates the MAPK pathway activation. The SMP complex specifically dephosphorylates the inhibitory phosphorylation at 'Ser-259' of RAF1 kinase, 'Ser-365' of BRAF kinase and 'Ser-214' of ARAF kinase, stimulating their kinase activities. Dephosphorylates MKI67 at the onset of anaphase. The SMP complex enhances the dephosphorylation activity and substrate specificity of PP1c. This Homo sapiens (Human) protein is Serine/threonine-protein phosphatase PP1-gamma catalytic subunit (PPP1CC).